The chain runs to 157 residues: Isotocin-neurophysin IT 1 (157 aa).

Residues 1 to 20 form the signal peptide; the sequence is MFGTSVSALCLLFLLSVCTA. A disulfide bond links Cys-21 and Cys-26. Residue Gly-29 is modified to Glycine amide. 7 cysteine pairs are disulfide-bonded: Cys-42–Cys-86, Cys-45–Cys-59, Cys-53–Cys-76, Cys-60–Cys-66, Cys-93–Cys-106, Cys-100–Cys-118, and Cys-107–Cys-112.

It belongs to the vasopressin/oxytocin family. Seven disulfide bonds are present in neurophysin.

The protein resides in the secreted. Functionally, isotocin causes contraction of smooth muscles. The polypeptide is Isotocin-neurophysin IT 1 (Oncorhynchus masou (Cherry salmon)).